A 1003-amino-acid polypeptide reads, in one-letter code: Cation-transporting ATPase HMA5 (1003 aa).

The disordered stretch occupies residues 6 to 25 (LSAVAGGGRPAAAGGGGDEM). The span at 10–22 (AGGGRPAAAGGGG) shows a compositional bias: gly residues. 3 HMA domains span residues 51-117 (EEAH…FDAE), 133-199 (LSAQ…FEAA), and 207-273 (DKIL…NGRL). Cysteine 62, cysteine 65, cysteine 144, and cysteine 147 together coordinate Cu cation. 8 helical membrane passes run 302–322 (SLFL…IPFI), 331–351 (GPFH…QFVV), 372–392 (VLVV…LLYG), 396–416 (GFHP…VLFG), 562–582 (IFVP…FLCG), 599–619 (FVFS…CALG), 938–958 (FFAM…LFPF), and 966–986 (WLAG…SLLL).

Belongs to the cation transport ATPase (P-type) (TC 3.A.3) family. Type IB subfamily. In terms of tissue distribution, expressed in root vascular cylinder, vascular bundles and mesophyll cells of leaf blades, and anther walls and microspores of stamens.

The protein localises to the cell membrane. Functionally, metal efflux transporter that may play a role in detoxification of heavy metals, such as zinc, copper, lead and cadmium, especially in the shoots. The polypeptide is Cation-transporting ATPase HMA5 (Oryza sativa subsp. japonica (Rice)).